A 298-amino-acid chain; its full sequence is MTTNSSGKPAGGISWRTYLALCKLKVVGHIVFTAIIGMFLAVPGVPPLDTAFWASLGIGFAAASAAALNHFLDRHADAEMARTQNRPLPSGDIRPAQVVGFALVLGIVAMAILIAFVNMLTAFLTFLSLIGYAVIYTVYLKRATPQNIVIGGAAGAAPPVLGWCAVTGSVHPYALLLFLLIFVWTPPHFWAYAIAKRDDYAKVDIPMLPVTHGIAFTQLHILLYTILLFLAGLMPYVTGMSGEIYLAAALIFGGIFVYYAIRLKRKADPRLAMQTFAYSLVYLVGIFSALLVDHYIVL.

9 consecutive transmembrane segments (helical) span residues 26–46, 52–72, 98–118, 120–140, 148–168, 174–194, 214–234, 241–261, and 278–298; these read VVGH…PGVP, FWAS…NHFL, VVGF…AFVN, LTAF…TVYL, IVIG…AVTG, ALLL…AYAI, IAFT…AGLM, SGEI…YYAI, and YSLV…YIVL.

The protein belongs to the UbiA prenyltransferase family. Protoheme IX farnesyltransferase subfamily.

It localises to the cell inner membrane. The catalysed reaction is heme b + (2E,6E)-farnesyl diphosphate + H2O = Fe(II)-heme o + diphosphate. The protein operates within porphyrin-containing compound metabolism; heme O biosynthesis; heme O from protoheme: step 1/1. Converts heme B (protoheme IX) to heme O by substitution of the vinyl group on carbon 2 of heme B porphyrin ring with a hydroxyethyl farnesyl side group. The chain is Protoheme IX farnesyltransferase from Methylococcus capsulatus (strain ATCC 33009 / NCIMB 11132 / Bath).